A 124-amino-acid polypeptide reads, in one-letter code: Superoxide reductase (124 aa).

Fe cation contacts are provided by Glu-14, His-16, His-41, His-47, Cys-111, and His-114.

This sequence belongs to the desulfoferrodoxin family. Homotetramer. Fe cation is required as a cofactor.

The enzyme catalyses reduced [rubredoxin] + superoxide + 2 H(+) = oxidized [rubredoxin] + H2O2. In terms of biological role, uses electrons from reduced NADP, by way of rubredoxin and an oxidoreductase, to catalyze the reduction of superoxide to hydrogen peroxide. This chain is Superoxide reductase (sorA), found in Pyrococcus furiosus (strain ATCC 43587 / DSM 3638 / JCM 8422 / Vc1).